The following is a 1571-amino-acid chain: Paternally-expressed gene 3 protein (1571 aa).

Disordered regions lie at residues 1–120 (MYHH…NPIQ) and 137–241 (AEDD…QERG). 5 stretches are compositionally biased toward basic and acidic residues: residues 35–56 (GSER…DRWP), 80–99 (FGLD…RSQD), 169–186 (PEAK…DESS), 193–215 (KFIK…ERPP), and 223–241 (DNWK…QERG). The segment at 199–265 (ARNPKSGRAR…DLASRSRALE (67 aa)) is 10 X 5 AA repeat of P-H-X-X-E. Residues 199–265 (ARNPKSGRAR…DLASRSRALE (67 aa)) are 3 X 5 AA repeat of P-H-D-D-K. C2H2-type zinc fingers lie at residues 325-347 (YVCD…QIMH), 378-400 (FECK…RQIH), 436-458 (YECK…QKIH), and 520-542 (YECK…QKIH). The interval 456–495 (KIHGRGNSDDRDNERERERDRLRARAREQRERERERERER) is disordered. 3 disordered regions span residues 585-649 (ALMG…LKFP), 672-713 (EAQK…TYEG), and 764-820 (REDA…AKKK). Residues 592–614 (SSEHQKNRSRRNFFEGRGFEKPF) are compositionally biased toward basic and acidic residues. Polar residues-rich tracts occupy residues 770 to 781 (GSSSSNYHTPNV) and 799 to 808 (DVTFSVPSSS). Residues 809 to 820 (VREHQKARAKKK) show a composition bias toward basic and acidic residues. A C2H2-type 5 zinc finger spans residues 850 to 872 (FECQECGEAFARRSELIEHQKIH). Residues 937 to 1070 (FNAEEPHDKE…ESHGQEKVED (134 aa)) form a disordered region. Over residues 940 to 1070 (EEPHDKETHG…ESHGQEKVED (131 aa)) the composition is skewed to basic and acidic residues. 13 tandem repeats follow at residues 942 to 946 (PHDKE), 967 to 971 (PHGDE), 987 to 991 (PHDDK), 992 to 996 (PHGQE), 997 to 1001 (PHDDK), 1002 to 1006 (PHGQE), 1007 to 1011 (PHDDK), 1012 to 1016 (PHGQE), 1017 to 1021 (PHGDE), 1022 to 1026 (PHGQE), 1027 to 1031 (PHGDE), 1032 to 1036 (PHDKE), and 1047 to 1051 (PHSEE). 4 consecutive C2H2-type zinc fingers follow at residues 1091–1113 (YECQ…QDTH), 1147–1169 (YECP…QRVH), 1209–1231 (IRCR…MRQH), and 1266–1289 (FECT…TKVH). The C2H2-type 10; degenerate zinc finger occupies 1317 to 1339 (YECKDCGQSFLDDTVIAERMVFH). The tract at residues 1373–1487 (NAEAAEPEVE…DQEIEVEEPY (115 aa)) is disordered. Composition is skewed to acidic residues over residues 1377-1397 (AEPE…EVEA), 1405-1418 (EGPD…DGEA), and 1431-1485 (DADE…EVEE). 2 consecutive C2H2-type zinc fingers follow at residues 1488-1510 (YNCH…LKSH) and 1547-1569 (FKCD…QNSH).

The protein belongs to the krueppel C2H2-type zinc-finger protein family. In terms of assembly, homodimer. Interacts with SIAH1A and SIAH2. Interacts with TRAF2. In terms of tissue distribution, brain, glial cells, neurons, skeletal muscle, uterus and placenta. In the placenta it is found in all trophoblast cells.

It localises to the nucleus. The protein resides in the cytoplasm. Functionally, induces apoptosis in cooperation with SIAH1A. Acts as a mediator between p53/TP53 and BAX in a neuronal death pathway that is activated by DNA damage. Acts synergistically with TRAF2 and inhibits TNF induced apoptosis through activation of NF-kappa-B. Plays a role in regulating maternal behavior and offspring growth. In Mus musculus (Mouse), this protein is Paternally-expressed gene 3 protein (Peg3).